Consider the following 110-residue polypeptide: Large ribosomal subunit protein uL22 (110 aa).

It belongs to the universal ribosomal protein uL22 family. As to quaternary structure, part of the 50S ribosomal subunit.

In terms of biological role, this protein binds specifically to 23S rRNA; its binding is stimulated by other ribosomal proteins, e.g. L4, L17, and L20. It is important during the early stages of 50S assembly. It makes multiple contacts with different domains of the 23S rRNA in the assembled 50S subunit and ribosome. The globular domain of the protein is located near the polypeptide exit tunnel on the outside of the subunit, while an extended beta-hairpin is found that lines the wall of the exit tunnel in the center of the 70S ribosome. This chain is Large ribosomal subunit protein uL22, found in Desulfotalea psychrophila (strain LSv54 / DSM 12343).